We begin with the raw amino-acid sequence, 193 residues long: Protein B4 (193 aa).

Helical transmembrane passes span 15 to 35 (FFVC…CVFF), 36 to 56 (CVYF…VFFV), and 160 to 180 (LSLC…IVFS).

The protein resides in the host membrane. This Homo sapiens (Human) protein is Protein B4 (B4).